The sequence spans 395 residues: Protein HIGH CHLOROPHYLL FLUORESCENCE PHENOTYPE 244, chloroplastic (395 aa).

Residues M1–C64 constitute a chloroplast transit peptide.

This sequence belongs to the NmrA-type oxidoreductase family. As to quaternary structure, component of a high molecular weight complex containing OHP1, OHP2 and HCF244, and PSII core proteins D1/D2, HCF136 and HCF173. Interacts with OHP1. Forms a trimeric complex with OHP1 and OHP2 that mutually stabilizes each subunit.

It localises to the plastid. The protein resides in the chloroplast stroma. It is found in the chloroplast thylakoid membrane. Auxiliary factor required, together with HCF173, for the biogenesis of photosystem II (PSII), especially for the synthesis of the reaction center proteins (e.g. D1), via the regulation of the corresponding mRNA (e.g. psbA) translation initiation (ribosomal loading) and stabilization. Forms a trimeric complex with OHP1 and OHP2 that is required to promote PSII core subunit assembly. The trimeric complex forms a transient PSII reaction center-like complex with PsbA, PsbD, PsbE, PsbF and PsbI subunits in thylakoids for early assembly of PSII as well as PSII repair. The trimeric complex is required for the recruitment of ribosomes to the psbA mRNA during PSII biogenesis and repair. This Arabidopsis thaliana (Mouse-ear cress) protein is Protein HIGH CHLOROPHYLL FLUORESCENCE PHENOTYPE 244, chloroplastic.